A 350-amino-acid polypeptide reads, in one-letter code: UDP-3-O-acylglucosamine N-acyltransferase (350 aa).

His257 serves as the catalytic Proton acceptor.

Belongs to the transferase hexapeptide repeat family. LpxD subfamily. In terms of assembly, homotrimer.

It catalyses the reaction a UDP-3-O-[(3R)-3-hydroxyacyl]-alpha-D-glucosamine + a (3R)-hydroxyacyl-[ACP] = a UDP-2-N,3-O-bis[(3R)-3-hydroxyacyl]-alpha-D-glucosamine + holo-[ACP] + H(+). It functions in the pathway bacterial outer membrane biogenesis; LPS lipid A biosynthesis. Functionally, catalyzes the N-acylation of UDP-3-O-acylglucosamine using 3-hydroxyacyl-ACP as the acyl donor. Is involved in the biosynthesis of lipid A, a phosphorylated glycolipid that anchors the lipopolysaccharide to the outer membrane of the cell. The protein is UDP-3-O-acylglucosamine N-acyltransferase of Chelativorans sp. (strain BNC1).